A 340-amino-acid chain; its full sequence is Anthranilate phosphoribosyltransferase (340 aa).

5-phospho-alpha-D-ribose 1-diphosphate is bound by residues Gly83, 86–87, Thr91, 93–96, 111–119, and Ser123; these read GD, NIST, and KHGNRSITS. Residue Gly83 participates in anthranilate binding. Ser95 provides a ligand contact to Mg(2+). Residue Asn114 coordinates anthranilate. An anthranilate-binding site is contributed by Arg169. Asp228 and Glu229 together coordinate Mg(2+).

The protein belongs to the anthranilate phosphoribosyltransferase family. Homodimer. Mg(2+) is required as a cofactor.

The enzyme catalyses N-(5-phospho-beta-D-ribosyl)anthranilate + diphosphate = 5-phospho-alpha-D-ribose 1-diphosphate + anthranilate. The protein operates within amino-acid biosynthesis; L-tryptophan biosynthesis; L-tryptophan from chorismate: step 2/5. In terms of biological role, catalyzes the transfer of the phosphoribosyl group of 5-phosphorylribose-1-pyrophosphate (PRPP) to anthranilate to yield N-(5'-phosphoribosyl)-anthranilate (PRA). In Solibacter usitatus (strain Ellin6076), this protein is Anthranilate phosphoribosyltransferase.